Here is a 319-residue protein sequence, read N- to C-terminus: HPr kinase/phosphorylase (319 aa).

Catalysis depends on residues His141 and Lys162. 156–163 is an ATP binding site; the sequence is GNSGVGKS. Ser163 contributes to the Mg(2+) binding site. Asp180 (proton acceptor; for phosphorylation activity. Proton donor; for dephosphorylation activity) is an active-site residue. An important for the catalytic mechanism of both phosphorylation and dephosphorylation region spans residues 204 to 213; sequence MEIRGIGIID. Glu205 contributes to the Mg(2+) binding site. The active site involves Arg246. An important for the catalytic mechanism of dephosphorylation region spans residues 267 to 272; the sequence is PVKVGR.

This sequence belongs to the HPrK/P family. In terms of assembly, homohexamer. Mg(2+) serves as cofactor.

The enzyme catalyses [HPr protein]-L-serine + ATP = [HPr protein]-O-phospho-L-serine + ADP + H(+). It carries out the reaction [HPr protein]-O-phospho-L-serine + phosphate + H(+) = [HPr protein]-L-serine + diphosphate. Functionally, catalyzes the ATP- as well as the pyrophosphate-dependent phosphorylation of a specific serine residue in HPr, a phosphocarrier protein of the phosphoenolpyruvate-dependent sugar phosphotransferase system (PTS). HprK/P also catalyzes the pyrophosphate-producing, inorganic phosphate-dependent dephosphorylation (phosphorolysis) of seryl-phosphorylated HPr (P-Ser-HPr). The two antagonistic activities of HprK/P are regulated by several intracellular metabolites, which change their concentration in response to the absence or presence of rapidly metabolisable carbon sources (glucose, fructose, etc.) in the growth medium. Therefore, by controlling the phosphorylation state of HPr, HPrK/P is a sensor enzyme that plays a major role in the regulation of carbon metabolism and sugar transport: it mediates carbon catabolite repression (CCR), and regulates PTS-catalyzed carbohydrate uptake and inducer exclusion. The polypeptide is HPr kinase/phosphorylase (Lactobacillus johnsonii (strain CNCM I-12250 / La1 / NCC 533)).